We begin with the raw amino-acid sequence, 225 residues long: ATP synthase subunit a (225 aa).

6 helical membrane-spanning segments follow: residues 18–38 (LSLN…MFWL), 73–93 (ILIS…FPYI), 100–120 (MTLT…FGWI), 126–146 (MFTH…MVLI), 156–176 (GTLA…LTLL), and 187–207 (IMLF…AVAM).

The protein belongs to the ATPase A chain family. As to quaternary structure, F-type ATPases have 2 components, CF(1) - the catalytic core - and CF(0) - the membrane proton channel. CF(1) has five subunits: alpha(3), beta(3), gamma(1), delta(1), epsilon(1). CF(0) has three main subunits: a, b and c.

The protein resides in the mitochondrion inner membrane. Functionally, mitochondrial membrane ATP synthase (F(1)F(0) ATP synthase or Complex V) produces ATP from ADP in the presence of a proton gradient across the membrane which is generated by electron transport complexes of the respiratory chain. F-type ATPases consist of two structural domains, F(1) - containing the extramembraneous catalytic core and F(0) - containing the membrane proton channel, linked together by a central stalk and a peripheral stalk. During catalysis, ATP synthesis in the catalytic domain of F(1) is coupled via a rotary mechanism of the central stalk subunits to proton translocation. Key component of the proton channel; it may play a direct role in the translocation of protons across the membrane. In Locusta migratoria (Migratory locust), this protein is ATP synthase subunit a (ATP6).